A 393-amino-acid polypeptide reads, in one-letter code: 26S proteasome regulatory subunit 10B (393 aa).

Residue 178–185 (GPPGTGKT) coordinates ATP.

This sequence belongs to the AAA ATPase family.

The protein resides in the cytoplasm. The protein localises to the nucleus. Its function is as follows. The 26S proteasome is involved in the ATP-dependent degradation of ubiquitinated proteins. The regulatory (or ATPase) complex confers ATP dependency and substrate specificity to the 26S complex. In Dictyostelium discoideum (Social amoeba), this protein is 26S proteasome regulatory subunit 10B (psmC6).